A 314-amino-acid polypeptide reads, in one-letter code: MSSALPDVSVTDLAPSLSPLQWVGMQGIDLPVRIQEPTYQRELHARADVQVDLPAPHVKGIHMSRLYRLLDAWGQAAAVSPASLFALLQEMIDSHQDCESRSARVRLDFDLLVRRPALVTEGLSGWKSYPVHVLATKVGGALNLSIEVRIGYSSTCPCSAALSRQLIEDGFLRTFKDQPLLEVSAVAQWLRSNASLATPHSQRSEARVRVTVPADAPDLGLLALIDHVEGALRTPVQTAVKRADEQAFAALNGQNLMFVEDAARRIQASLHGYRDSQVHVRHLESLHPHDASAWSAPQAAAPDQQESFATGNER.

The segment at 290-314 is disordered; that stretch reads DASAWSAPQAAAPDQQESFATGNER. Residues 291-304 are compositionally biased toward low complexity; sequence ASAWSAPQAAAPDQ. Positions 305–314 are enriched in polar residues; that stretch reads QESFATGNER.

The protein belongs to the GTP cyclohydrolase IV family.

The catalysed reaction is GTP + H2O = 7,8-dihydroneopterin 3'-triphosphate + formate + H(+). The protein operates within cofactor biosynthesis; 7,8-dihydroneopterin triphosphate biosynthesis; 7,8-dihydroneopterin triphosphate from GTP: step 1/1. Its function is as follows. Converts GTP to 7,8-dihydroneopterin triphosphate. This chain is GTP cyclohydrolase FolE2, found in Pseudomonas putida (strain ATCC 47054 / DSM 6125 / CFBP 8728 / NCIMB 11950 / KT2440).